The primary structure comprises 1011 residues: Vacuolar membrane protease (1011 aa).

Residues methionine 1–asparagine 14 are Cytoplasmic-facing. Residues leucine 15–phenylalanine 35 form a helical membrane-spanning segment. Over arginine 36–leucine 352 the chain is Vacuolar. Zn(2+) is bound by residues histidine 149, aspartate 161, glutamate 194, glutamate 219, and histidine 293. Residues phenylalanine 353–valine 373 traverse the membrane as a helical segment. Over alanine 374–arginine 390 the chain is Cytoplasmic. The chain crosses the membrane as a helical span at residues leucine 391–glutamine 411. The Vacuolar segment spans residues leucine 412–aspartate 420. The helical transmembrane segment at tyrosine 421 to serine 441 threads the bilayer. Residues serine 442–aspartate 451 are Cytoplasmic-facing. The chain crosses the membrane as a helical span at residues phenylalanine 452–threonine 472. Over arginine 473–proline 487 the chain is Vacuolar. The chain crosses the membrane as a helical span at residues phenylalanine 488 to phenylalanine 508. The Cytoplasmic portion of the chain corresponds to lysine 509 to glutamine 647. The interval methionine 534–serine 585 is disordered. Residues serine 542–proline 567 show a composition bias toward basic residues. Over residues arginine 568–glutamate 578 the composition is skewed to polar residues. A helical membrane pass occupies residues phenylalanine 648 to glycine 668. Residues alanine 669 to threonine 681 are Vacuolar-facing. N-linked (GlcNAc...) asparagine glycosylation is present at asparagine 671. The chain crosses the membrane as a helical span at residues threonine 682 to phenylalanine 702. The Cytoplasmic segment spans residues threonine 703 to serine 708. A helical transmembrane segment spans residues phenylalanine 709–proline 729. Residues proline 730 to leucine 1011 are Vacuolar-facing. 3 N-linked (GlcNAc...) asparagine glycosylation sites follow: asparagine 751, asparagine 825, and asparagine 854.

This sequence belongs to the peptidase M28 family. It depends on Zn(2+) as a cofactor.

The protein resides in the vacuole membrane. Functionally, may be involved in vacuolar sorting and osmoregulation. This Eremothecium gossypii (strain ATCC 10895 / CBS 109.51 / FGSC 9923 / NRRL Y-1056) (Yeast) protein is Vacuolar membrane protease.